A 253-amino-acid chain; its full sequence is Zinc finger protein GIS (253 aa).

The segment covering 1 to 10 (MDEATGETET) has biased composition (acidic residues). Residues 1-85 (MDEATGETET…GDNSTDNNSI (85 aa)) are disordered. Polar residues-rich tracts occupy residues 11–21 (QDFMNVESFSQ), 49–63 (SITT…PYQT), and 76–85 (GDNSTDNNSI). The C2H2-type zinc-finger motif lies at 91–113 (FECHYCFRNFPTSQALGGHQNAH).

Expressed in inflorescence meristems, floral meristems and stem epidermis.

The protein resides in the nucleus. Its function is as follows. Probable transcription factor required for the initiation of inflorescence trichomes in response to gibberellin (GA). Mediates the induction of GL1 expression by GA in inflorescence organs and is antagonized in its action by the DELLA repressor GAI. Acts upstream of the trichome initiation regulators GL1 and GL3, and downstream of the GA signaling repressor SPINDLY (SPY). Does not play a significant role in the cytokinin response. Controls trichome branching through GA signaling. Acts downstream of the key regulator STICHEL (STI) in an endoreduplication-independent pathway. Controls trichome cell division indirectly by acting downstream of a key endoreduplication regulator SIAMESE (SIM). The sequence is that of Zinc finger protein GIS (GIS) from Arabidopsis thaliana (Mouse-ear cress).